We begin with the raw amino-acid sequence, 286 residues long: Deleted in azoospermia-like-B (286 aa).

The 82-residue stretch at 33–114 (NTVFVGGIDI…PAIRKICTYV (82 aa)) folds into the RRM domain. The DAZ domain occupies 155 to 180 (ACPYPSSPPMAIQQIPVGCQQPGYFQ).

This sequence belongs to the RRM DAZ family. As to quaternary structure, interacts with the C-terminus of pabp1 and with epabp. Prior to oocyte maturation, found in a complex with epabp and pum2 proteins and spdy1 mRNA; pum2 dissociates from the complex during maturation.

The protein resides in the cytoplasm. In terms of biological role, RNA-binding protein that is required for primordial germ cell (PGC) differentiation and indirectly necessary for the migration of PGCs through the endoderm. May promote meiotic cell division during spermatogenesis. Shows a preference for G- and U-rich RNAs and probably binds the 3'-UTR of target mRNAs. Stimulates the initiation of translation of mRNAs through the recruitment of poly(A)-binding proteins (PABPs). The sequence is that of Deleted in azoospermia-like-B (dazl-b) from Xenopus laevis (African clawed frog).